The sequence spans 197 residues: UPF0301 protein Adeh_3962 (197 aa).

Belongs to the UPF0301 (AlgH) family.

The protein is UPF0301 protein Adeh_3962 of Anaeromyxobacter dehalogenans (strain 2CP-C).